The sequence spans 1201 residues: Potassium/sodium hyperpolarization-activated cyclic nucleotide-gated channel 4 (1201 aa).

Over 1–263 the chain is Cytoplasmic; the sequence is MDKLPPSMRK…IIHPYSDFRF (263 aa). The interval 24–183 is disordered; the sequence is WIMDEEEDGE…PASASCEQPS (160 aa). Over residues 26-36 the composition is skewed to acidic residues; sequence MDEEEDGEEEG. Residues 105–118 are compositionally biased toward gly residues; it reads SRGGGSGGAGGGSS. A compositionally biased stretch (basic and acidic residues) spans 121-132; it reads HLHDSAEERRLI. Ser139 bears the Phosphoserine mark. Residues 164-174 are compositionally biased toward pro residues; that stretch reads ASPPPQQPPQP. The tract at residues 209–260 is involved in subunit assembly; it reads GQSGFMQRQFGAMLQPGVNKFSLRMFGSQKAVEREQERVKSAGFWIIHPYSD. Residues 264-286 traverse the membrane as a helical segment; that stretch reads YWDLTMLLLMVGNLIIIPVGITF. Residues 287-293 are Extracellular-facing; sequence FKDENTT. The helical transmembrane segment at 294–314 threads the bilayer; that stretch reads PWIVFNVVSDTFFLIDLVLNF. Topologically, residues 315 to 336 are cytoplasmic; the sequence is RTGIVVEDNTEIILDPQRIKMK. The chain crosses the membrane as a helical span at residues 337–359; sequence YLKSWFVVDFISSIPVDYIFLIV. Over 360 to 378 the chain is Extracellular; that stretch reads ETRIDSEVYKTARALRIVR. The helical; Voltage-sensor transmembrane segment at 379-399 threads the bilayer; that stretch reads FTKILSLLRLLRLSRLIRYIH. At 400–413 the chain is on the cytoplasmic side; the sequence is QWEEIFHMTYDLAS. The helical transmembrane segment at 414 to 436 threads the bilayer; that stretch reads AVVRIVNLIGMMLLLCHWDGCLQ. Residues 437–464 lie on the Extracellular side of the membrane; sequence FLVPMLQDFPHDCWVSINGMVNNSWGKQ. Asn458 carries N-linked (GlcNAc...) asparagine glycosylation. The segment at residues 465–486 is an intramembrane region (pore-forming); the sequence is YSYALFKAMSHMLCIGYGRQAP. At 487-491 the chain is on the extracellular side; the sequence is VGMSD. A helical transmembrane segment spans residues 492–517; it reads VWLTMLSMIVGATCYAMFIGHATALI. At 518-1201 the chain is on the cytoplasmic side; that stretch reads QSLDSSRRQY…PVRSKLPSNL (684 aa). 4 residues coordinate 3',5'-cyclic GMP: Tyr559, Lys562, Phe564, and Glu566. Residues Gly659, Glu660, Cys662, Arg669, Thr670, Val673, and Arg710 each coordinate 3',5'-cyclic AMP. 2 disordered regions span residues 804-902 and 914-1201; these read AIFR…TAAA and ALGG…PSNL. 2 stretches are compositionally biased toward low complexity: residues 831–856 and 866–880; these read SLIPSALGSASPASSPSQVDTPSSSS and SAPPGLSPLLPSSSS. The span at 881-894 shows a compositional bias: pro residues; that stretch reads SPPPGACGSPPAPT. Low complexity-rich tracts occupy residues 915–939 and 967–995; these read LGGSLSSSDSPLLTPLQPGARSPQA and RSPSSSPGQLGQPPGELSLGLAAGPSSTP. Over residues 1029–1042 the composition is skewed to pro residues; the sequence is GHSPGPPRTFPSAP. A compositionally biased stretch (low complexity) spans 1045–1056; it reads ASGSHGSLLLPP. Phosphoserine occurs at positions 1105 and 1108. The span at 1122–1134 shows a compositional bias: gly residues; it reads AGGGSGSSGGLGP.

This sequence belongs to the potassium channel HCN family. In terms of assembly, homotetramer. The potassium channel is composed of a homo- or heterotetrameric complex of pore-forming subunits. Interacts with PEX5L with a 4:4 HCN4:PEX5L stoichiometry; reduces the effects of cAMP on the voltage-dependence and rate of activation. Interacts with IRAG1; regulates HCN4 channel activity. Interacts with IRAG2; regulates HCN4 channel activity. S-palmitoylated. In terms of tissue distribution, detected in a subset of elongated cells in taste buds.

It localises to the cell membrane. The catalysed reaction is K(+)(in) = K(+)(out). It carries out the reaction Na(+)(in) = Na(+)(out). With respect to regulation, activated by cAMP, and to a lesser extent by cGMP and cCMP. cAMP binding causes a conformation change that leads to the assembly of an active tetramer and channel opening. Binding of cAMP removes a tonic inhibition conferred by cyclic nucleotide-binding domain (CNBD) on channel opening. Cyclic dinucleotides can modulate HCN4 channel; cyclic dinucleotides acting as potent antagonists of cAMP. Inhibited by extracellular Cs(+) ions. Auxiliary subunits can also regulate HCN4 channel. IRAG1 causes a gain-of-function by shifting HCN4 activation to more depolarized membrane potentials in the absence of cAMP. In contrast, IRAG2 causes a loss-of-function by inhibiting cAMP-dependent potentiation of HCN4 activation. Its function is as follows. Hyperpolarization-activated ion channel that are permeable to Na(+) and K(+) ions with very slow activation and inactivation. Exhibits higher selectivity for K(+) over Na(+) ions. Contributes to the native pacemaker currents in heart (If) that regulate the rhythm of heart beat. Contributes to the native pacemaker currents in neurons (Ih). May mediate responses to sour stimuli. The sequence is that of Potassium/sodium hyperpolarization-activated cyclic nucleotide-gated channel 4 (Hcn4) from Mus musculus (Mouse).